An 838-amino-acid chain; its full sequence is MANILRTIIENDKGELRKLEKMANKVIAYSDQMAALSDEELKAKTDEFKQRYQNGESLDDLLYEAFAVVREGAKRVLGLYPYPVQIMGGIVLHHGDVPEMRTGEGKTLTATMPVYLNALAGEGVHVVTVNEYLTERDATEMGELYSWLGLSVGINLAAKSPAEKREAYACDITYSTNSEIGFDYLRDNMVVRAENMVQRPLNYALVDEVDSILIDEARTPLIVSGPVSSETNQLYHMADSFVKSLNKDDYIIDVPSKTIGLSDSGIDKAESYFKLDNLYDIENVALTHFIDNALRANYIMILDIDYVVSEEQEILIVDQFTGRTMEGRRYSDGLHQAIEAKEGVPVQDETKTSASITYQNLFRMYKKLSGMTGTAKTEEEEFRETYNIRVIPIPTNRPIARIDHEDLLYPSLESKFKAVVEDVKERHLKGQPVLVGTVAVETSDYLSKKLVAAGIPHEVLNAKNHYREAQIIMNAGQRGAVTIATNMAGRGTDIKLGEGVRELGGLCVIGTERHESRRIDNQLRGRSGRQGDPGESQFYLSLEDELMRRFGSERIKAVLDRFKLSEEESVIKSKMFTRQVEAAQKRVEGNNYDTRKQVLQYDDVMREQREIIYAERHDVITANRDLAPEIHAMIKRTIDRFVDGNSRAPQEEKLDSILYFAKYNLVPEESISLSDLQGLSDEEIKASLYERALEVYNSQIAKLRDEEAVREFQKVLILRVVDNKWTDHIDALDQLRNAVGLRGYAQNNPVVEYQSESFRMFNDMIGSIEFDVTRLMMKAQIHEQERPRTEHNIVTTATRNISAQESDLPADVDLAKVGRNELCPCGSGKKFKNCHGRR.

Residues Gln-85, 103–107 (GEGKT), and Asp-493 each bind ATP. Residues Cys-823, Cys-825, Cys-834, and His-835 each coordinate Zn(2+).

Belongs to the SecA family. As to quaternary structure, monomer and homodimer. Part of the essential Sec protein translocation apparatus which comprises SecA, SecYEG and auxiliary proteins SecDF. Other proteins may also be involved. It depends on Zn(2+) as a cofactor.

It is found in the cell membrane. The protein localises to the cytoplasm. It catalyses the reaction ATP + H2O + cellular proteinSide 1 = ADP + phosphate + cellular proteinSide 2.. Functionally, part of the Sec protein translocase complex. Interacts with the SecYEG preprotein conducting channel. Has a central role in coupling the hydrolysis of ATP to the transfer of proteins into and across the cell membrane, serving as an ATP-driven molecular motor driving the stepwise translocation of polypeptide chains across the membrane. In Streptococcus gordonii (strain Challis / ATCC 35105 / BCRC 15272 / CH1 / DL1 / V288), this protein is Protein translocase subunit SecA.